The sequence spans 312 residues: Malate dehydrogenase (312 aa).

NAD(+) is bound by residues 12–17 and Asp-36; that span reads GAGFTG. 2 residues coordinate substrate: Arg-87 and Arg-93. NAD(+) contacts are provided by residues Asn-100 and 123–125; that span reads LTN. Asn-125 serves as a coordination point for substrate. At Ser-149 the chain carries Phosphoserine. Arg-156 is a substrate binding site. The active-site Proton acceptor is His-180.

Belongs to the LDH/MDH superfamily. MDH type 3 family.

It carries out the reaction (S)-malate + NAD(+) = oxaloacetate + NADH + H(+). Its function is as follows. Catalyzes the reversible oxidation of malate to oxaloacetate. The protein is Malate dehydrogenase of Anoxybacillus flavithermus (strain DSM 21510 / WK1).